We begin with the raw amino-acid sequence, 371 residues long: MHIVSFIIFFFALFFPISICYKINGVCDFSSEGLSLLPEEKLDFSVSRNVDKLSDENNVRHCVHFSKGFEYLRFICPMRKDNYEGIEIRPVECFEYIHIEGREHKLSEILKGSLYEKSINDNIMTRDVFIPPTIYEDMFFECTCDNSLTFKNNMIGIRGIMKIHLKKNILYGCDFDHDEKLMKNKTAFTNFYDKQKILPLIGNNNNDDDNNDDDNNNDNNNNDNNNNNNNNNNNNNNNNNNNITCNVTIKKSQVYLGIICPDGYTLYPNDCFKNVIYDNNIIIPLKKIIPHDILYHQDKNKRITFASFTLNINENPPGFTCYCIKDQTNINNPLIVNFHFSNQETSYATKNKNLFFYFIFIFPFLYVILLL.

An N-terminal signal peptide occupies residues 1–20; it reads MHIVSFIIFFFALFFPISIC. 6-Cys domains follow at residues 23–168 and 169–343; these read INGV…LKKN and ILYG…FSNQ. 4 disulfides stabilise this stretch: Cys27–Cys62, Cys76–Cys144, Cys93–Cys142, and Cys173–Cys245. Asn184 is a glycosylation site (N-linked (GlcNAc...) asparagine). The tract at residues 202-239 is disordered; sequence GNNNNDDDNNDDDNNNDNNNNDNNNNNNNNNNNNNNNN. Acidic residues predominate over residues 206–216; sequence NDDDNNDDDNN. The segment covering 217 to 239 has biased composition (low complexity); sequence NDNNNNDNNNNNNNNNNNNNNNN. 2 N-linked (GlcNAc...) asparagine glycosylation sites follow: Asn242 and Asn246. Cystine bridges form between Cys260–Cys323 and Cys271–Cys321.

The protein resides in the cell surface. It localises to the cell membrane. This chain is Surface protein P12p (PFS12P), found in Plasmodium falciparum (isolate 3D7).